A 210-amino-acid polypeptide reads, in one-letter code: Na(+)-translocating NADH-quinone reductase subunit D (210 aa).

6 helical membrane-spanning segments follow: residues 10-30, 42-62, 72-92, 103-123, 131-151, and 178-198; these read VLIGPIVSNNPIALQILGVCS, LVMTIALTAVCALSNLFISLI, IIVQMTIIASLVIVVDQVLQA, VFVGLIITNCIVMGRAEAYAM, FMDGIGNGLGYGAILLSVGFV, and NGLLLLPPSAFFLIGALIWII.

It belongs to the NqrDE/RnfAE family. Composed of six subunits; NqrA, NqrB, NqrC, NqrD, NqrE and NqrF.

The protein localises to the cell inner membrane. It catalyses the reaction a ubiquinone + n Na(+)(in) + NADH + H(+) = a ubiquinol + n Na(+)(out) + NAD(+). Functionally, NQR complex catalyzes the reduction of ubiquinone-1 to ubiquinol by two successive reactions, coupled with the transport of Na(+) ions from the cytoplasm to the periplasm. NqrA to NqrE are probably involved in the second step, the conversion of ubisemiquinone to ubiquinol. The sequence is that of Na(+)-translocating NADH-quinone reductase subunit D from Shewanella pealeana (strain ATCC 700345 / ANG-SQ1).